The sequence spans 790 residues: uncharacterized protein (790 aa).

One can recognise a TBDR plug domain in the interval Ala-37–Lys-172. The 613-residue stretch at Asp-178 to Phe-790 folds into the TBDR beta-barrel domain.

The protein belongs to the TonB-dependent receptor family.

Its subcellular location is the cell outer membrane. This is an uncharacterized protein from Escherichia coli (strain K12).